Here is a 30-residue protein sequence, read N- to C-terminus: Cyclotide cycloviolacin O17 (30 aa).

Residues 1-30 (GIPCGESCVWIPCISAAIGCSCKNKVCYRN) constitute a cross-link (cyclopeptide (Gly-Asn)). 3 cysteine pairs are disulfide-bonded: Cys4-Cys20, Cys8-Cys22, and Cys13-Cys27.

This is a cyclic peptide.

Functionally, probably participates in a plant defense mechanism. This Psychotria brachyceras protein is Cyclotide cycloviolacin O17.